Reading from the N-terminus, the 828-residue chain is Periplasmic nitrate reductase (828 aa).

The tat-type signal signal peptide spans 1–31; sequence MKLSRRSFMKANAVAAAAAAAGLSVPGVARA. One can recognise a 4Fe-4S Mo/W bis-MGD-type domain in the interval 39–95; it reads IKWDKAPCRFCGTGCGVLVGTQQGRVVACQGDPDAPVNRGLNCIKGYFLPKIMYGKD. [4Fe-4S] cluster is bound by residues cysteine 46, cysteine 49, cysteine 53, and cysteine 81. Mo-bis(molybdopterin guanine dinucleotide) contacts are provided by residues lysine 83, glutamine 150, asparagine 175, cysteine 179, 212-219, 243-247, 262-264, methionine 372, glutamine 376, asparagine 482, 508-509, lysine 531, aspartate 558, and 718-727; these read WGANMAEM, STYQH, QSD, SD, and TGRVLEHWHT. Phenylalanine 794 lines the substrate pocket. The Mo-bis(molybdopterin guanine dinucleotide) site is built by asparagine 802 and lysine 819.

This sequence belongs to the prokaryotic molybdopterin-containing oxidoreductase family. NasA/NapA/NarB subfamily. As to quaternary structure, component of the periplasmic nitrate reductase NapAB complex composed of NapA and NapB. It depends on [4Fe-4S] cluster as a cofactor. The cofactor is Mo-bis(molybdopterin guanine dinucleotide). Predicted to be exported by the Tat system. The position of the signal peptide cleavage has not been experimentally proven.

It is found in the periplasm. The catalysed reaction is 2 Fe(II)-[cytochrome] + nitrate + 2 H(+) = 2 Fe(III)-[cytochrome] + nitrite + H2O. Catalytic subunit of the periplasmic nitrate reductase complex NapAB. Receives electrons from NapB and catalyzes the reduction of nitrate to nitrite. The sequence is that of Periplasmic nitrate reductase from Shigella flexneri serotype 5b (strain 8401).